The primary structure comprises 247 residues: Carboxy-S-adenosyl-L-methionine synthase (247 aa).

S-adenosyl-L-methionine contacts are provided by residues Y40, 65-67, 90-91, 122-123, N137, and R204; these read GAS, DN, and DI.

It belongs to the class I-like SAM-binding methyltransferase superfamily. Cx-SAM synthase family. As to quaternary structure, homodimer.

It carries out the reaction prephenate + S-adenosyl-L-methionine = carboxy-S-adenosyl-L-methionine + 3-phenylpyruvate + H2O. Functionally, catalyzes the conversion of S-adenosyl-L-methionine (SAM) to carboxy-S-adenosyl-L-methionine (Cx-SAM). This chain is Carboxy-S-adenosyl-L-methionine synthase, found in Pseudomonas fluorescens (strain Pf0-1).